A 150-amino-acid polypeptide reads, in one-letter code: Anthranilate synthase component 1 (150 aa).

An L-tryptophan-binding site is contributed by Ser-40. Chorismate is bound at residue Arg-119.

This sequence belongs to the anthranilate synthase component I family. As to quaternary structure, heterotetramer consisting of two non-identical subunits: a beta subunit (TrpG) and a large alpha subunit (TrpE). Mg(2+) is required as a cofactor.

It catalyses the reaction chorismate + L-glutamine = anthranilate + pyruvate + L-glutamate + H(+). It participates in amino-acid biosynthesis; L-tryptophan biosynthesis; L-tryptophan from chorismate: step 1/5. Its activity is regulated as follows. Feedback inhibited by tryptophan. In terms of biological role, part of a heterotetrameric complex that catalyzes the two-step biosynthesis of anthranilate, an intermediate in the biosynthesis of L-tryptophan. In the first step, the glutamine-binding beta subunit (TrpG) of anthranilate synthase (AS) provides the glutamine amidotransferase activity which generates ammonia as a substrate that, along with chorismate, is used in the second step, catalyzed by the large alpha subunit of AS (TrpE) to produce anthranilate. In the absence of TrpG, TrpE can synthesize anthranilate directly from chorismate and high concentrations of ammonia. The protein is Anthranilate synthase component 1 (trpE) of Citrobacter freundii.